Consider the following 396-residue polypeptide: 12-oxophytodienoate reductase 3 (396 aa).

Residues 31–33 (PMT), glycine 64, and glutamine 106 each bind FMN. A substrate-binding site is contributed by 185–188 (HGAH). Residue tyrosine 190 is the Proton donor of the active site. Arginine 237 contacts FMN. A substrate-binding site is contributed by arginine 283. Residues glycine 321 and 342–343 (GR) contribute to the FMN site. An FMN region spans residues 342 to 343 (GR). Residues 394–396 (SRL) carry the Microbody targeting signal motif.

The protein belongs to the NADH:flavin oxidoreductase/NADH oxidase family. Requires FMN as cofactor. As to expression, expressed in roots and to a lower extent in leaves and flowers.

Its subcellular location is the peroxisome. It carries out the reaction (1S,2S)-OPC-8 + NADP(+) = (9S,13S,15Z)-12-oxophyto-10,15-dienoate + NADPH + H(+). The protein operates within lipid metabolism; oxylipin biosynthesis. Functionally, specifically cleaves olefinic bonds in cyclic enones. Involved in the biosynthesis of jasmonic acid (JA) and perhaps in biosynthesis or metabolism of other oxylipin signaling moleclules. It is required for the spatial and temporal regulation of JA levels during dehiscence of anthers, promoting the stomium degeneration program. In vitro, reduces 9S,13S-12-oxophytodienoic acid (9S,13S-OPDA) and 9R,13R-OPDA to 9S,13S-OPC-8:0 and 9R,13R-OPC-8:0, respectively. This is 12-oxophytodienoate reductase 3 (OPR3) from Solanum lycopersicum (Tomato).